A 429-amino-acid polypeptide reads, in one-letter code: Glutamate--tRNA ligase 1 (429 aa).

The short motif at 6-16 (PSPTGDMHIGN) is the 'HIGH' region element. A 'KMSKS' region motif is present at residues 235–239 (KMSKR). Lysine 238 serves as a coordination point for ATP.

Belongs to the class-I aminoacyl-tRNA synthetase family. Glutamate--tRNA ligase type 1 subfamily. As to quaternary structure, monomer.

It is found in the cytoplasm. It catalyses the reaction tRNA(Glu) + L-glutamate + ATP = L-glutamyl-tRNA(Glu) + AMP + diphosphate. Catalyzes the attachment of glutamate to tRNA(Glu) in a two-step reaction: glutamate is first activated by ATP to form Glu-AMP and then transferred to the acceptor end of tRNA(Glu). This chain is Glutamate--tRNA ligase 1, found in Campylobacter fetus subsp. fetus (strain 82-40).